Here is a 368-residue protein sequence, read N- to C-terminus: tRNA-specific 2-thiouridylase MnmA (368 aa).

ATP-binding positions include 10-17 and Met36; that span reads AMSGGVDS. Cys108 acts as the Nucleophile in catalysis. A disulfide bond links Cys108 and Cys206. Residue Gly132 coordinates ATP. Residues 156–158 form an interaction with tRNA region; that stretch reads KDQ. Cys206 (cysteine persulfide intermediate) is an active-site residue. An interaction with tRNA region spans residues 312–313; sequence RY.

It belongs to the MnmA/TRMU family.

It localises to the cytoplasm. It carries out the reaction S-sulfanyl-L-cysteinyl-[protein] + uridine(34) in tRNA + AH2 + ATP = 2-thiouridine(34) in tRNA + L-cysteinyl-[protein] + A + AMP + diphosphate + H(+). Functionally, catalyzes the 2-thiolation of uridine at the wobble position (U34) of tRNA, leading to the formation of s(2)U34. This is tRNA-specific 2-thiouridylase MnmA from Natranaerobius thermophilus (strain ATCC BAA-1301 / DSM 18059 / JW/NM-WN-LF).